The chain runs to 23 residues: GLFGVLAKVASHVVPAIAEHFQA.

Ala-23 is modified (alanine amide).

Expressed by the skin dorsal glands.

It localises to the secreted. Functionally, shows antibacterial activity against S.aureus and S.uberis. This chain is Maculatin-1.2, found in Ranoidea genimaculata (Brown-spotted tree frog).